A 40-amino-acid chain; its full sequence is Ribosome-inactivating protein saporin-1 (40 aa).

The protein belongs to the ribosome-inactivating protein family. Type 1 RIP subfamily.

It carries out the reaction Endohydrolysis of the N-glycosidic bond at one specific adenosine on the 28S rRNA.. Its function is as follows. Ribosome-inactivating protein of type 1, inhibits protein synthesis in animal cells. The protein is Ribosome-inactivating protein saporin-1 (SAP1) of Saponaria officinalis (Common soapwort).